We begin with the raw amino-acid sequence, 938 residues long: Protein O-mannosyl-transferase Tmtc2 (938 aa).

Position 1 (methionine 1) is a topological domain, cytoplasmic. The helical transmembrane segment at 2 to 22 (PSLEPWLWGDSCSWLGMLAML) threads the bilayer. Residues 23 to 34 (RLRLHKSNMDFT) lie on the Extracellular side of the membrane. The chain crosses the membrane as a helical span at residues 35–55 (CLFCCSLAFVLYLNTLGAGFV). At 56 to 108 (YDDRRAILANADVSGGTPWQRSFSNDFWGTPLTDSGSHGSWRPLCVLSFRLNY) the chain is on the cytoplasmic side. Residues 109–129 (LIGGGFAPWGFHLVNNLLHCV) form a helical membrane-spanning segment. Residues 130 to 139 (ATALVVRVAR) are Extracellular-facing. The helical transmembrane segment at 140–160 (TLLASVWAVLAAGALFAAHPI) threads the bilayer. The Cytoplasmic portion of the chain corresponds to 161–164 (HTEA). The helical transmembrane segment at 165-185 (VAGVVGRADLAACVCYLLTYL) threads the bilayer. Topologically, residues 186 to 208 (SYLRHMRWRESGDPRQWLALGAT) are extracellular. The helical transmembrane segment at 209–229 (LILAAAGLLCKETAITALLVC) threads the bilayer. At 230 to 249 (ALFDVMRGLSGQVDKQRLRS) the chain is on the cytoplasmic side. The chain crosses the membrane as a helical span at residues 250 to 270 (VCIVLGALFCMAYCRLVIVPG). Residues 271 to 291 (PQTAFSSADNPIARTPSAWTR) lie on the Extracellular side of the membrane. Residues 292–312 (LLTFLYLPVFNLRLLLQPNVL) traverse the membrane as a helical segment. The Cytoplasmic segment spans residues 313–510 (SFDWGMDALP…HACVLIMSLS (198 aa)). Positions 450–480 (RSSSSCSNSTNSSSSSSSSSSSSSSSSSSLS) are disordered. Residues 511–531 (FLALPFLPASNLLFYVGFVVA) form a helical membrane-spanning segment. The Extracellular portion of the chain corresponds to 532-533 (ER). A helical transmembrane segment spans residues 534-554 (LLYLPSVGFCLLVGYGVSKLM). Topologically, residues 555-562 (SCNQRTRN) are cytoplasmic. Residues 563-580 (ILLLSFSLLLAAMSLRTL) traverse the membrane as a helical segment. Over 581–938 (RRNADWRDEE…NLAKLGVTNV (358 aa)) the chain is Extracellular. 9 TPR repeats span residues 602–635 (PKAL…RPNM), 636–669 (ADVH…RPNL), 670–703 (AVAY…DGAA), 715–748 (SSAY…LPGL), 753–786 (EILY…QPNQ), 788–821 (AAHL…APEQ), 822–855 (ASVY…APND), 856–889 (YTLV…RPGD), and 890–923 (AHAH…QPGD). N-linked (GlcNAc...) asparagine glycosylation is present at asparagine 800.

This sequence belongs to the TMTC family.

Its subcellular location is the membrane. It localises to the endoplasmic reticulum. It catalyses the reaction a di-trans,poly-cis-dolichyl beta-D-mannosyl phosphate + L-seryl-[protein] = 3-O-(alpha-D-mannosyl)-L-seryl-[protein] + a di-trans,poly-cis-dolichyl phosphate + H(+). The catalysed reaction is a di-trans,poly-cis-dolichyl beta-D-mannosyl phosphate + L-threonyl-[protein] = 3-O-(alpha-D-mannosyl)-L-threonyl-[protein] + a di-trans,poly-cis-dolichyl phosphate + H(+). Its pathway is protein modification; protein glycosylation. Its function is as follows. Transfers mannosyl residues to the hydroxyl group of serine or threonine residues. The polypeptide is Protein O-mannosyl-transferase Tmtc2 (Drosophila melanogaster (Fruit fly)).